We begin with the raw amino-acid sequence, 414 residues long: Glucose-6-phosphate isomerase (414 aa).

Glutamate 266 serves as the catalytic Proton donor. Active-site residues include histidine 292 and lysine 405.

This sequence belongs to the GPI family.

The protein localises to the cytoplasm. The enzyme catalyses alpha-D-glucose 6-phosphate = beta-D-fructose 6-phosphate. The protein operates within carbohydrate biosynthesis; gluconeogenesis. It participates in carbohydrate degradation; glycolysis; D-glyceraldehyde 3-phosphate and glycerone phosphate from D-glucose: step 2/4. Catalyzes the reversible isomerization of glucose-6-phosphate to fructose-6-phosphate. The polypeptide is Glucose-6-phosphate isomerase (Thermus thermophilus (strain ATCC BAA-163 / DSM 7039 / HB27)).